A 359-amino-acid chain; its full sequence is Peptide chain release factor 1 (359 aa).

Residue glutamine 235 is modified to N5-methylglutamine. A disordered region spans residues 284-311; sequence KAESERSASRKNQVGSGDRSERIRTYNF.

This sequence belongs to the prokaryotic/mitochondrial release factor family. Post-translationally, methylated by PrmC. Methylation increases the termination efficiency of RF1.

The protein resides in the cytoplasm. Peptide chain release factor 1 directs the termination of translation in response to the peptide chain termination codons UAG and UAA. The polypeptide is Peptide chain release factor 1 (Bartonella quintana (strain Toulouse) (Rochalimaea quintana)).